We begin with the raw amino-acid sequence, 408 residues long: Argininosuccinate synthase (408 aa).

ATP-binding positions include 10–18 (AYSGGLDTS) and Ala-37. Residues Tyr-90 and Ser-95 each contribute to the L-citrulline site. An ATP-binding site is contributed by Gly-120. Residues Thr-122, Asn-126, and Asp-127 each coordinate L-aspartate. An L-citrulline-binding site is contributed by Asn-126. Positions 130, 182, 191, 267, and 279 each coordinate L-citrulline.

This sequence belongs to the argininosuccinate synthase family. Type 1 subfamily. Homotetramer.

It is found in the cytoplasm. The enzyme catalyses L-citrulline + L-aspartate + ATP = 2-(N(omega)-L-arginino)succinate + AMP + diphosphate + H(+). The protein operates within amino-acid biosynthesis; L-arginine biosynthesis; L-arginine from L-ornithine and carbamoyl phosphate: step 2/3. The protein is Argininosuccinate synthase of Paraburkholderia phytofirmans (strain DSM 17436 / LMG 22146 / PsJN) (Burkholderia phytofirmans).